Here is a 488-residue protein sequence, read N- to C-terminus: Signal recognition particle receptor FtsY (488 aa).

Residues 14-82 (DTAPEDVSKP…AVPDDAVHGG (69 aa)) form a disordered region. Positions 32-67 (VGTSSTGSPVGTGAAMPAAQDAPSPAAPHAIATPDD) are enriched in low complexity. GTP is bound by residues 287 to 294 (GVNGVGKT), 369 to 373 (DTAGR), and 433 to 436 (TKLD).

The protein belongs to the GTP-binding SRP family. FtsY subfamily. As to quaternary structure, part of the signal recognition particle protein translocation system, which is composed of SRP and FtsY. SRP is a ribonucleoprotein composed of Ffh and a 4.5S RNA molecule.

Its subcellular location is the cell inner membrane. It localises to the cytoplasm. The catalysed reaction is GTP + H2O = GDP + phosphate + H(+). Functionally, involved in targeting and insertion of nascent membrane proteins into the cytoplasmic membrane. Acts as a receptor for the complex formed by the signal recognition particle (SRP) and the ribosome-nascent chain (RNC). Interaction with SRP-RNC leads to the transfer of the RNC complex to the Sec translocase for insertion into the membrane, the hydrolysis of GTP by both Ffh and FtsY, and the dissociation of the SRP-FtsY complex into the individual components. This Nitratidesulfovibrio vulgaris (strain ATCC 29579 / DSM 644 / CCUG 34227 / NCIMB 8303 / VKM B-1760 / Hildenborough) (Desulfovibrio vulgaris) protein is Signal recognition particle receptor FtsY.